A 76-amino-acid polypeptide reads, in one-letter code: Small ribosomal subunit protein bS16 (76 aa).

It belongs to the bacterial ribosomal protein bS16 family.

In Sulfurovum sp. (strain NBC37-1), this protein is Small ribosomal subunit protein bS16.